The primary structure comprises 262 residues: Hydroxyethylthiazole kinase (262 aa).

M50 provides a ligand contact to substrate. ATP is bound by residues R125 and T171. G198 is a binding site for substrate.

It belongs to the Thz kinase family. Mg(2+) is required as a cofactor.

The enzyme catalyses 5-(2-hydroxyethyl)-4-methylthiazole + ATP = 4-methyl-5-(2-phosphooxyethyl)-thiazole + ADP + H(+). It participates in cofactor biosynthesis; thiamine diphosphate biosynthesis; 4-methyl-5-(2-phosphoethyl)-thiazole from 5-(2-hydroxyethyl)-4-methylthiazole: step 1/1. Functionally, catalyzes the phosphorylation of the hydroxyl group of 4-methyl-5-beta-hydroxyethylthiazole (THZ). This chain is Hydroxyethylthiazole kinase, found in Shigella sonnei (strain Ss046).